The sequence spans 256 residues: Probable ABC transporter ATP-binding protein spyM18_0273 (256 aa).

In terms of domain architecture, ABC transporter spans 4 to 246 (LEINNLHVSI…EKEGYAGIAQ (243 aa)). 36–43 (GPNGTGKS) is an ATP binding site.

It belongs to the ABC transporter superfamily. Ycf16 family.

It is found in the cell membrane. The polypeptide is Probable ABC transporter ATP-binding protein spyM18_0273 (Streptococcus pyogenes serotype M18 (strain MGAS8232)).